We begin with the raw amino-acid sequence, 308 residues long: Acetaldehyde dehydrogenase (308 aa).

14 to 17 is a binding site for NAD(+); the sequence is TGNI. The active-site Acyl-thioester intermediate is the Cys129. Residues 160 to 168 and Asn280 each bind NAD(+); that span reads SAGPGTRQN.

This sequence belongs to the acetaldehyde dehydrogenase family.

It carries out the reaction acetaldehyde + NAD(+) + CoA = acetyl-CoA + NADH + H(+). This chain is Acetaldehyde dehydrogenase, found in Thermomicrobium roseum (strain ATCC 27502 / DSM 5159 / P-2).